We begin with the raw amino-acid sequence, 240 residues long: Large ribosomal subunit protein uL1c (240 aa).

It belongs to the universal ribosomal protein uL1 family. In terms of assembly, part of the 50S ribosomal subunit.

Its subcellular location is the plastid. It is found in the chloroplast. Its function is as follows. Binds directly to 23S rRNA. Might be involved in E site tRNA release (Potential). This is Large ribosomal subunit protein uL1c (rpl1) from Cyanidium caldarium (Red alga).